A 423-amino-acid chain; its full sequence is Serpin B12 (423 aa).

The segment covering 63–72 (LSKDEHKEPN) has biased composition (basic and acidic residues). Positions 63-106 (LSKDEHKEPNDPSPQSESKASDSSLEGQKQTSASQDQQGESTND) are disordered. The span at 75–106 (SPQSESKASDSSLEGQKQTSASQDQQGESTND) shows a compositional bias: polar residues.

Belongs to the serpin family. Ov-serpin subfamily. Interacts with SLFN12; as part of a pathway regulating cell differentiation.

The protein resides in the cytoplasm. Functionally, inhibits trypsin and plasmin, but not thrombin, coagulation factor Xa, or urokinase-type plasminogen activator. May play a role in cell differentiation. The polypeptide is Serpin B12 (Serpinb12) (Mus musculus (Mouse)).